We begin with the raw amino-acid sequence, 446 residues long: Cobalamin biosynthesis protein CbiHC (446 aa).

Residues 1–246 (MLLLPSRGKL…MFTPRGYSNK (246 aa)) form a cobalt-factor III C(17)-methyltransferase region. Residues 247 to 446 (YNIGEKRRAE…CLIEHADRPD (200 aa)) are cobalt-precorrin-8 methylmutase.

It in the N-terminal section; belongs to the precorrin methyltransferase family. In the C-terminal section; belongs to the CobH family.

It catalyses the reaction Co(II)-factor III + S-adenosyl-L-methionine + H(+) = Co(II)-factor IV + S-adenosyl-L-homocysteine. It carries out the reaction Co-precorrin-8X = cob(II)yrinate. It functions in the pathway cofactor biosynthesis; adenosylcobalamin biosynthesis; cob(II)yrinate a,c-diamide from sirohydrochlorin (anaerobic route): step 3/10. The protein operates within cofactor biosynthesis; adenosylcobalamin biosynthesis; cob(II)yrinate a,c-diamide from sirohydrochlorin (anaerobic route): step 9/10. Its function is as follows. Bifunctional enzyme with a methyltransferase domain that catalyzes the ring contraction and methylation of C-17 in cobalt-factor III to form cobalt-factor IV, and an isomerase domain that catalyzes the conversion of cobalt-precorrin-8 to cobyrinate. In Archaeoglobus fulgidus (strain ATCC 49558 / DSM 4304 / JCM 9628 / NBRC 100126 / VC-16), this protein is Cobalamin biosynthesis protein CbiHC (cbiHC).